We begin with the raw amino-acid sequence, 260 residues long: Phosphatidate cytidylyltransferase (260 aa).

7 helical membrane-spanning segments follow: residues 9–29 (IIAL…LMLF), 46–66 (MIKL…IIML), 70–90 (AGDW…FILL), 102–122 (FMDA…FMYF), 130–150 (LHYI…AYIF), 172–192 (FIGG…FVDF), and 196–216 (IWLL…GDLV).

Belongs to the CDS family.

The protein resides in the cell membrane. It carries out the reaction a 1,2-diacyl-sn-glycero-3-phosphate + CTP + H(+) = a CDP-1,2-diacyl-sn-glycerol + diphosphate. It functions in the pathway phospholipid metabolism; CDP-diacylglycerol biosynthesis; CDP-diacylglycerol from sn-glycerol 3-phosphate: step 3/3. This chain is Phosphatidate cytidylyltransferase (cdsA), found in Staphylococcus haemolyticus (strain JCSC1435).